A 94-amino-acid polypeptide reads, in one-letter code: Selenoprotein K (94 aa).

The chain crosses the membrane as a helical span at residues 20–42 (LSLITDFFWGIAEFVVLFFKTLL). The interval 48–94 (KRRSYGNSSDSRYDDGRGPPGNPPRRMGRINHLRGPSPPPMAGGUGR) is disordered. Sec-92 is a non-standard amino acid (selenocysteine).

It belongs to the selenoprotein K family. Interacts with DERL1, DERL2, DERL3 and SELENOS. The SELENOK-SELENOS complex interacts with VCP. Interacts with ZDHHC6. In terms of processing, cleaved by CAPN2/m-calpain in resting macrophages but not in activated macrophages. Macrophage activation up-regulates expression of the calpain inhibitor CAST/calpastatin, resulting in inhibition of CAPN2 activity. Truncated SELENOK proteins produced by failed UGA/Sec decoding are ubiquitinated by the CRL2(KLHDC2) complex, which recognizes the diglycine (Gly-Gly) at the C-terminus of truncated SELENOK proteins. As to expression, highly expressed in heart.

The protein localises to the endoplasmic reticulum membrane. The protein resides in the cell membrane. Functionally, required for Ca(2+) flux in immune cells and plays a role in T-cell proliferation and in T-cell and neutrophil migration. Involved in endoplasmic reticulum-associated degradation (ERAD) of soluble glycosylated proteins. Required for palmitoylation and cell surface expression of CD36 and involved in macrophage uptake of low-density lipoprotein and in foam cell formation. Together with ZDHHC6, required for palmitoylation of ITPR1 in immune cells, leading to regulate ITPR1 stability and function. Plays a role in protection of cells from ER stress-induced apoptosis. Protects cells from oxidative stress when overexpressed in cardiomyocytes. This is Selenoprotein K from Homo sapiens (Human).